Consider the following 354-residue polypeptide: Small ribosomal subunit biogenesis GTPase RsgA (354 aa).

The tract at residues 1–46 is disordered; the sequence is MSKKKPLSQGQLRRMRANHEKRLNRDSGDKNTPELQDSSLGPEQSG. A compositionally biased stretch (basic and acidic residues) spans 17 to 32; sequence ANHEKRLNRDSGDKNT. Polar residues predominate over residues 33-46; it reads PELQDSSLGPEQSG. Positions 108 to 276 constitute a CP-type G domain; that stretch reads HSSLSRPDLY…LIDSPGVREF (169 aa). GTP-binding positions include 164 to 167 and 218 to 226; these read NKID and GQSGVGKSS. Zn(2+)-binding residues include C300, C305, H307, and C313.

The protein belongs to the TRAFAC class YlqF/YawG GTPase family. RsgA subfamily. In terms of assembly, monomer. Associates with 30S ribosomal subunit, binds 16S rRNA. Zn(2+) is required as a cofactor.

Its subcellular location is the cytoplasm. In terms of biological role, one of several proteins that assist in the late maturation steps of the functional core of the 30S ribosomal subunit. Helps release RbfA from mature subunits. May play a role in the assembly of ribosomal proteins into the subunit. Circularly permuted GTPase that catalyzes slow GTP hydrolysis, GTPase activity is stimulated by the 30S ribosomal subunit. This is Small ribosomal subunit biogenesis GTPase RsgA from Shewanella oneidensis (strain ATCC 700550 / JCM 31522 / CIP 106686 / LMG 19005 / NCIMB 14063 / MR-1).